The following is a 279-amino-acid chain: Shikimate dehydrogenase (NADP(+)) (279 aa).

Shikimate contacts are provided by residues Ser20–Ser22 and Thr67. Lys71 (proton acceptor) is an active-site residue. Residue Asp83 coordinates NADP(+). Residues Asn92 and Asp108 each contribute to the shikimate site. NADP(+) contacts are provided by residues Gly134–Ala138 and Leu223. Position 225 (Tyr225) interacts with shikimate. Gly246 contributes to the NADP(+) binding site.

Belongs to the shikimate dehydrogenase family. In terms of assembly, homodimer.

It carries out the reaction shikimate + NADP(+) = 3-dehydroshikimate + NADPH + H(+). It participates in metabolic intermediate biosynthesis; chorismate biosynthesis; chorismate from D-erythrose 4-phosphate and phosphoenolpyruvate: step 4/7. Involved in the biosynthesis of the chorismate, which leads to the biosynthesis of aromatic amino acids. Catalyzes the reversible NADPH linked reduction of 3-dehydroshikimate (DHSA) to yield shikimate (SA). In Cereibacter sphaeroides (strain KD131 / KCTC 12085) (Rhodobacter sphaeroides), this protein is Shikimate dehydrogenase (NADP(+)).